A 142-amino-acid polypeptide reads, in one-letter code: Myosin-2 essential light chain (142 aa).

2 EF-hand domains span residues 2–37 and 75–110; these read DDLADCREVFAYFDSKGDERISVQQVGDVLRALGQN and HTVEEFVEGLSHFDKEGNGMINVAELRHLLTTLGER.

In terms of assembly, myosin is a hexamer of 2 heavy chains and 4 light chains (two regulatory light chains and two essential light chains).

It localises to the cytoplasm. It is found in the cytoskeleton. In terms of biological role, required for cytokinesis and embryo elongation. May regulate myosin II complex formation and/or the association of myosin with actin. May be involved in the organization of mlc-4 and nmy-2 into bundles. The sequence is that of Myosin-2 essential light chain from Caenorhabditis elegans.